We begin with the raw amino-acid sequence, 534 residues long: Glucose-6-phosphate isomerase (534 aa).

E356 acts as the Proton donor in catalysis. Residues H387 and K502 contribute to the active site.

This sequence belongs to the GPI family.

The protein resides in the cytoplasm. The enzyme catalyses alpha-D-glucose 6-phosphate = beta-D-fructose 6-phosphate. It participates in carbohydrate biosynthesis; gluconeogenesis. It functions in the pathway carbohydrate degradation; glycolysis; D-glyceraldehyde 3-phosphate and glycerone phosphate from D-glucose: step 2/4. In terms of biological role, catalyzes the reversible isomerization of glucose-6-phosphate to fructose-6-phosphate. This is Glucose-6-phosphate isomerase from Desulfotalea psychrophila (strain LSv54 / DSM 12343).